Consider the following 463-residue polypeptide: Ribosomal protein uS12 methylthiotransferase RimO (463 aa).

The MTTase N-terminal domain occupies 11–126; sequence PKIGFVSLGC…VMEVVHTHCP (116 aa). [4Fe-4S] cluster is bound by residues Cys20, Cys56, Cys85, Cys161, Cys165, and Cys168. The 242-residue stretch at 147–388 folds into the Radical SAM core domain; that stretch reads LTPRHYAYLK…MAVAEEVSTA (242 aa). The region spanning 391–463 is the TRAM domain; that stretch reads QRRVGQTMQV…QGHDLVGVPV (73 aa).

It belongs to the methylthiotransferase family. RimO subfamily. The cofactor is [4Fe-4S] cluster.

The protein resides in the cytoplasm. It catalyses the reaction L-aspartate(89)-[ribosomal protein uS12]-hydrogen + (sulfur carrier)-SH + AH2 + 2 S-adenosyl-L-methionine = 3-methylsulfanyl-L-aspartate(89)-[ribosomal protein uS12]-hydrogen + (sulfur carrier)-H + 5'-deoxyadenosine + L-methionine + A + S-adenosyl-L-homocysteine + 2 H(+). Catalyzes the methylthiolation of an aspartic acid residue of ribosomal protein uS12. In Acidovorax sp. (strain JS42), this protein is Ribosomal protein uS12 methylthiotransferase RimO.